Here is a 75-residue protein sequence, read N- to C-terminus: Small ribosomal subunit protein bS18c (75 aa).

This sequence belongs to the bacterial ribosomal protein bS18 family. Part of the 30S ribosomal subunit.

Its subcellular location is the plastid. It localises to the chloroplast. This Psilotum nudum (Whisk fern) protein is Small ribosomal subunit protein bS18c.